Here is a 103-residue protein sequence, read N- to C-terminus: Large ribosomal subunit protein uL22c (103 aa).

It belongs to the universal ribosomal protein uL22 family. As to quaternary structure, part of the 50S ribosomal subunit.

It localises to the plastid. It is found in the chloroplast. Its function is as follows. This protein binds specifically to 23S rRNA. The globular domain of the protein is located near the polypeptide exit tunnel on the outside of the subunit, while an extended beta-hairpin is found that lines the wall of the exit tunnel in the center of the 70S ribosome. This chain is Large ribosomal subunit protein uL22c (rpl22), found in Cyanidium caldarium (Red alga).